The following is a 236-amino-acid chain: Lipoarabinomannan carrier protein LprG (236 aa).

Positions 1–25 (MQTRPRFAVQSLFAILATAAALVAG) are cleaved as a signal peptide. Residue C26 is the site of N-palmitoyl cysteine attachment. C26 carries the S-diacylglycerol cysteine lipid modification.

Belongs to the LppX/LprAFG lipoprotein family. Interacts with itself, Ag85A (MSMEG_6398), LppI (MSMEG_3851) and LppK (MSMEG_3904) in vivo.

The protein localises to the cell inner membrane. It is found in the secreted. It localises to the cell wall. In terms of biological role, helps membrane protein MSMEG_3069/MSMEI_2992 (P55) transport triacylglycerides (TAG) across the inner cell membrane into the periplasm and probably ultimately to the outer membrane. Binds TAG in its hydrophobic cavity and transfers it between lipid bilayers. TAG probably regulates lipid metabolism and growth regulation and plays a structural role in the outer membrane. Also binds mannosides, lipoarabinomannan and lipomannan and various glycolipids in the same cavity. Required for MSMEG_3069/MSMEI_2992 export activity. Export of ethidium bromide by MSMEG_3069/MSMEI_2992 can be complemented by the equivalent operon from M.tuberculosis (lprG-Rv1410c). Involved in mycolylation. This is Lipoarabinomannan carrier protein LprG from Mycolicibacterium smegmatis (strain ATCC 700084 / mc(2)155) (Mycobacterium smegmatis).